The sequence spans 357 residues: Cyclin-dependent kinase-like 1 (357 aa).

Residues 4–287 (YEKIGKIGEG…CEQLLHHPYF (284 aa)) enclose the Protein kinase domain. Residues 10–18 (IGEGSYGVV) and Lys33 each bind ATP. The short motif at 45–51 (KKIALRE) is the [NKR]KIAxRE element. Catalysis depends on Asp126, which acts as the Proton acceptor.

It belongs to the protein kinase superfamily. CMGC Ser/Thr protein kinase family. CDC2/CDKX subfamily. As to expression, highly expressed in kidney, and to a lower extent in ovary.

The protein localises to the cytoplasm. It localises to the nucleus. The enzyme catalyses L-seryl-[protein] + ATP = O-phospho-L-seryl-[protein] + ADP + H(+). It catalyses the reaction L-threonyl-[protein] + ATP = O-phospho-L-threonyl-[protein] + ADP + H(+). The protein is Cyclin-dependent kinase-like 1 of Homo sapiens (Human).